The following is a 139-amino-acid chain: Myosin light chain kinase, smooth muscle (139 aa).

Residues 48-97 (APTGENAKAPEMKARRPKSSLPPVLGTESDATVKKKPAPKTPPKAAMPPQ) form a disordered region.

Belongs to the protein kinase superfamily. CAMK Ser/Thr protein kinase family. As to quaternary structure, interacts with SVIL. Post-translationally, the C-terminus is deglutamylated by AGTPBP1/CCP1, AGBL1/CCP4 and AGBL4/CCP6, leading to the formation of Myosin light chain kinase, smooth muscle, deglutamylated form. The consequences of C-terminal deglutamylation are unknown.

The catalysed reaction is L-seryl-[myosin light chain] + ATP = O-phospho-L-seryl-[myosin light chain] + ADP + H(+). It catalyses the reaction L-threonyl-[myosin light chain] + ATP = O-phospho-L-threonyl-[myosin light chain] + ADP + H(+). Its function is as follows. Phosphorylates a specific serine in the N-terminus of a myosin light chain. Also regulates actin-myosin interaction through a non-kinase activity. The sequence is that of Myosin light chain kinase, smooth muscle (MYLK) from Sus scrofa (Pig).